The primary structure comprises 335 residues: Probable cytosolic iron-sulfur protein assembly protein Ciao1 (335 aa).

WD repeat units lie at residues 12–51 (GHKGRIWGVAWHPKGNVFASCGEDKAIRIWSLNGNTWTTK), 57–96 (GHKRTIREIRWSPCGQYLASASFDGTTAIWSKSSGEFECN), 101–140 (GHENEVKSVSWSRSGGLLATCSRDKSVWIWEVAGDDEFEC), 146–185 (PHTQDVKRVVWHPTKELLASASYDNTIKMFAEDALDSDWD), 192–231 (SHTSTVWSIDFDATGERLVSCSDDTSLKIWQAYHPGNDAG), 250–289 (QHSRAIYDVSWCKLTNLIATACGDDGIRIFKETSDSKRDE), and 301–335 (AHDQDVNSVEWNPVVEGQLISCSDDGTIKVWKMTE).

The protein belongs to the WD repeat CIA1 family.

In terms of biological role, essential component of the cytosolic iron-sulfur (Fe/S) protein assembly machinery. Required for the maturation of extramitochondrial Fe/S proteins. This chain is Probable cytosolic iron-sulfur protein assembly protein Ciao1, found in Drosophila ananassae (Fruit fly).